The following is an 85-amino-acid chain: Protein C4 (85 aa).

A lipid anchor (N-myristoyl glycine; by host) is attached at glycine 2. The segment at 42–65 (LNPAPTSSPTSTRTETQLNGGNSR) is disordered. A compositionally biased stretch (low complexity) spans 44-57 (PAPTSSPTSTRTET).

It belongs to the geminiviridae protein AC4/C4 family. Interacts with Arabidopsis thaliana RCH2, ASK7/ASK-eta and ASK6/ASK-zeta. Phosphorylated by Arabidopsis thaliana ASK7/ASK-eta mainly on threonine and serine residues. In terms of tissue distribution, expressed in vascular tissues, and especially in phloem cells.

The protein resides in the host cell membrane. Its function is as follows. Major determinant of pathogenesis that affects the hyperplastic response of the host to viral infection. Mediates the induction of cell division in permissive cells, mainly in phloem. May act as a suppressor of RNA-mediated gene silencing, also known as post-transcriptional gene silencing (PTGS), a mechanism of plant viral defense that limits the accumulation of viral RNAs. This chain is Protein C4, found in Beet curly top virus (strain California/Logan) (BCTV).